Here is a 372-residue protein sequence, read N- to C-terminus: Tribbles homolog 1 (372 aa).

Disordered regions lie at residues 1–23 (MRVGPVRSAMSGASQPRGPALLF) and 52–86 (ECSSPPDYLSPPGSPCSPQPPPAAPGAGGGSGSAP). A compositionally biased stretch (pro residues) spans 59 to 75 (YLSPPGSPCSPQPPPAA). Residues 91–338 (IADYLLLPLA…APEILLHPWF (248 aa)) enclose the Protein kinase domain. The COP1-binding signature appears at 355 to 360 (DQIVPE).

Belongs to the protein kinase superfamily. CAMK Ser/Thr protein kinase family. Tribbles subfamily. In terms of assembly, monomer. Interacts (via protein kinase domain) with CEBPA. Interacts with COP1. As to expression, expressed in most human tissues with the highest levels in skeletal muscle, thyroid gland, pancreas, peripheral blood leukocytes, and bone marrow.

In terms of biological role, adapter protein involved in protein degradation by interacting with COP1 ubiquitin ligase. The COP1-binding motif is masked by autoinhibitory interactions with the protein kinase domain. Serves to alter COP1 substrate specificity by directing the activity of COP1 toward CEBPA. Binds selectively the recognition sequence of CEBPA. Regulates myeloid cell differentiation by altering the expression of CEBPA in a COP1-dependent manner. Controls macrophage, eosinophil and neutrophil differentiation via the COP1-binding domain. Interacts with MAPK kinases and regulates activation of MAP kinases, but has no kinase activity. This Homo sapiens (Human) protein is Tribbles homolog 1.